A 94-amino-acid chain; its full sequence is Large ribosomal subunit protein uL23cz (94 aa).

This sequence belongs to the universal ribosomal protein uL23 family. Part of the 50S ribosomal subunit.

The protein localises to the plastid. Its subcellular location is the chloroplast. Binds to 23S rRNA. The chain is Large ribosomal subunit protein uL23cz (rpl23-A) from Agrostis stolonifera (Creeping bentgrass).